The chain runs to 425 residues: ADP-ribose glycohydrolase MACROD2 (425 aa).

Residues 59 to 240 (QETSQVKKSL…IYKKKMNEFF (182 aa)) enclose the Macro domain. Residues 77–79 (GDI), 90–92 (AAN), and 97–102 (GGGGVD) each bind substrate. K170 participates in a covalent cross-link: Glycyl lysine isopeptide (Lys-Gly) (interchain with G-Cter in ubiquitin). Residues 185–191 (ISTGIYG) and F224 each bind substrate. The tract at residues 243 to 425 (DDNNEEEEDV…EAKEQRNGTK (183 aa)) is disordered. Positions 244–262 (DNNEEEEDVEMKEDSDENG) are enriched in acidic residues. The segment covering 302–343 (EDFAKDENITKGGEVTDHSVRDQDHPDGQENDSTKNEIKIET) has biased composition (basic and acidic residues). Residues 344–360 (ESQSSYMETEELSSNQE) are compositionally biased toward polar residues. 2 stretches are compositionally biased toward basic and acidic residues: residues 381-391 (EGEKAPGEDTP) and 415-425 (DEAKEQRNGTK).

This sequence belongs to the MacroD-type family. MacroD1/2-like subfamily. Interacts with ADP-ribosylated PARP1.

It localises to the nucleus. The enzyme catalyses 2''-O-acetyl-ADP-D-ribose + H2O = ADP-D-ribose + acetate + H(+). The catalysed reaction is 4-O-(ADP-D-ribosyl)-L-aspartyl-[protein] + H2O = L-aspartyl-[protein] + ADP-D-ribose + H(+). It catalyses the reaction 5-O-(ADP-D-ribosyl)-L-glutamyl-[protein] + H2O = L-glutamyl-[protein] + ADP-D-ribose + H(+). It carries out the reaction alpha-NAD(+) + H2O = ADP-D-ribose + nicotinamide + H(+). Subject to product inhibition by ADP-ribose. In terms of biological role, removes ADP-ribose from aspartate and glutamate residues in proteins bearing a single ADP-ribose moiety. Inactive towards proteins bearing poly-ADP-ribose. Deacetylates O-acetyl-ADP ribose, a signaling molecule generated by the deacetylation of acetylated lysine residues in histones and other proteins. The chain is ADP-ribose glycohydrolase MACROD2 from Homo sapiens (Human).